Reading from the N-terminus, the 467-residue chain is DNA polymerase IV (467 aa).

Positions 5–187 (VLHIDMDAFF…LPVGALWGVG (183 aa)) constitute a UmuC domain. Positions 9 and 104 each coordinate Mg(2+). The active site involves E105. Disordered stretches follow at residues 364–386 (PDTD…VEAP) and 428–449 (TKGR…DPLD).

Belongs to the DNA polymerase type-Y family. As to quaternary structure, monomer. Mg(2+) is required as a cofactor.

The protein resides in the cytoplasm. It catalyses the reaction DNA(n) + a 2'-deoxyribonucleoside 5'-triphosphate = DNA(n+1) + diphosphate. In terms of biological role, poorly processive, error-prone DNA polymerase involved in untargeted mutagenesis. Copies undamaged DNA at stalled replication forks, which arise in vivo from mismatched or misaligned primer ends. These misaligned primers can be extended by PolIV. Exhibits no 3'-5' exonuclease (proofreading) activity. May be involved in translesional synthesis, in conjunction with the beta clamp from PolIII. In Corynebacterium glutamicum (strain R), this protein is DNA polymerase IV.